Here is a 97-residue protein sequence, read N- to C-terminus: Nucleoid-associated protein Hac_0048 (97 aa).

The protein belongs to the YbaB/EbfC family. In terms of assembly, homodimer.

It localises to the cytoplasm. It is found in the nucleoid. In terms of biological role, binds to DNA and alters its conformation. May be involved in regulation of gene expression, nucleoid organization and DNA protection. The protein is Nucleoid-associated protein Hac_0048 of Helicobacter acinonychis (strain Sheeba).